The sequence spans 369 residues: Bi-functional coumaroyl CoA and feruloyl CoA ortho-hydroxylase Diox1 (369 aa).

Residues 209–319 (IREPMLVGSR…RISVPLFVNP (111 aa)) enclose the Fe2OG dioxygenase domain. Y225 contributes to the 2-oxoglutarate binding site. Fe cation is bound by residues H240, D242, and H300. 2-oxoglutarate contacts are provided by R310 and S312.

This sequence belongs to the iron/ascorbate-dependent oxidoreductase family. Requires L-ascorbate as cofactor. Fe(2+) serves as cofactor.

It catalyses the reaction (E)-4-coumaroyl-CoA + 2-oxoglutarate + O2 = (E)-2,4-dihydroxycinnamoyl-CoA + succinate + CO2. The catalysed reaction is (E)-feruloyl-CoA + 2-oxoglutarate + O2 = (E)-6-hydroxyferuloyl-CoA + succinate + CO2. Its pathway is phenylpropanoid metabolism. 2-oxoglutarate (OG)- and Fe(II)-dependent dioxygenase (2OGD) involved in scopoletin and umbelliferone biosynthesis. Converts feruloyl CoA into 6'-hydroxyferuloyl CoA, and p-coumaroyl CoA into 2,4-dihydroxycinnamoyl-CoA. This Ruta graveolens (Common rue) protein is Bi-functional coumaroyl CoA and feruloyl CoA ortho-hydroxylase Diox1.